We begin with the raw amino-acid sequence, 364 residues long: MDNRHLALYPFVTEASEYVGSLGFSPDKLLSSRALESARIRGRERVIQALEGEIEKPSPSSSEEGKILTELLSYPFSRILVSCIDDPFLTRKYALAEAKAAYHLLKTQQPEFLQDLATDFRINAEIYENPETHDIFFDLHFTDYIKLASPLKDLNWKLVNRKMKKGYVKISKEELARLLQEAIRLRIQNSLPVTVPKEICEACIPHTDTISEELEKKKTEFGVGEFQRVESDLFPPCITQAIANVRAGVNLAHSMRFAMTSFLINIGMSVDEVVAMFNISPDFDEEKTRYQIEHIAGTSSGTTYKPPSCNTMRTYGNCSAPDELCKGVKHPLGYYSRRVWVKNRMQNDNEKGHEEKKEGETPPQ.

C237, C309, C318, and C325 together coordinate [4Fe-4S] cluster. The interval 345–364 is disordered; sequence MQNDNEKGHEEKKEGETPPQ.

Belongs to the eukaryotic-type primase large subunit family. As to quaternary structure, heterodimer of a small subunit (PriS) and a large subunit (PriL). The cofactor is [4Fe-4S] cluster.

Its function is as follows. Regulatory subunit of DNA primase, an RNA polymerase that catalyzes the synthesis of short RNA molecules used as primers for DNA polymerase during DNA replication. Stabilizes and modulates the activity of the small subunit, increasing the rate of DNA synthesis, and conferring RNA synthesis capability. The DNA polymerase activity may enable DNA primase to also catalyze primer extension after primer synthesis. May also play a role in DNA repair. The protein is DNA primase large subunit PriL of Methanococcoides burtonii (strain DSM 6242 / NBRC 107633 / OCM 468 / ACE-M).